A 1479-amino-acid polypeptide reads, in one-letter code: Protein CHROMATIN REMODELING 20 (1479 aa).

Residues 19–49 adopt a coiled-coil conformation; that stretch reads EVIVESKEDEMDIIIEENREAEQEVMEVKAR. The span at 40 to 55 shows a compositional bias: basic and acidic residues; that stretch reads EQEVMEVKARDGRGEQ. The interval 40–109 is disordered; it reads EQEVMEVKAR…DELDLEKPLS (70 aa). Over residues 76–86 the composition is skewed to low complexity; that stretch reads DASSRSESSDF. Residues 94 to 109 show a composition bias toward basic and acidic residues; sequence ILSRRDDELDLEKPLS. Residues 109–199 are a coiled coil; sequence SEEEIDELIS…EQLDGAGIEL (91 aa). In terms of domain architecture, ADD spans 472–601; the sequence is RDDSQNPANN…KKSIELSSDS (130 aa). A GATA-type; atypical zinc finger spans residues 483–514; it reads RCTACNKVAVEVHSHPLLEVIVCMDCKRSIED. A PHD-type; atypical zinc finger spans residues 524–577; that stretch reads ERHCEWCGHIADLIDCRTCEKLFCASCIKRNIGEEYMSEAQSSGWDCCCCSPIP. The stretch at 578–598 forms a coiled coil; sequence LQRLTLELEKAMRDKKSIELS. Residues 594–615 are disordered; the sequence is SIELSSDSSSDSSSDNNSVDTD. A compositionally biased stretch (low complexity) spans 598–615; the sequence is SSDSSSDSSSDNNSVDTD. One can recognise a Helicase ATP-binding domain in the interval 741–924; sequence VKSGDKGLGC…YCMVDFVREG (184 aa). Residue 754–761 participates in ATP binding; it reads HTMGLGKT. Residues 875 to 878 carry the DEAH box motif; the sequence is DEAH. The region spanning 1122 to 1290 is the Helicase C-terminal domain; that stretch reads DILSMSADVG…QVHRTISKEE (169 aa). Positions 1400-1423 are disordered; that stretch reads SESPVVPKPSPSTQTEPLPQPKGF.

This sequence belongs to the SNF2/RAD54 helicase family.

Its subcellular location is the nucleus. The protein localises to the chromosome. It localises to the telomere. Involved in transcriptional regulation and chromatin remodeling. Facilitates DNA replication in multiple cellular environments and is required for efficient replication of a subset of genomic loci. Binds to DNA tandem repeat sequences in both telomeres and euchromatin and in vitro binds DNA quadruplex structures. May help stabilizing G-rich regions into regular chromatin structures by remodeling G4 DNA and incorporating H3.3-containing nucleosomes. Involved in DNA repair of gamma-irradiation-mediated damages. The protein is Protein CHROMATIN REMODELING 20 of Arabidopsis thaliana (Mouse-ear cress).